The sequence spans 309 residues: Protein FdhE homolog (309 aa).

It belongs to the FdhE family.

The protein resides in the cytoplasm. Necessary for formate dehydrogenase activity. This Serratia proteamaculans (strain 568) protein is Protein FdhE homolog.